Here is a 131-residue protein sequence, read N- to C-terminus: Phosphoribosyl-AMP cyclohydrolase (131 aa).

D89 is a Mg(2+) binding site. C90 lines the Zn(2+) pocket. Mg(2+) contacts are provided by D91 and D93. Residues C106 and C113 each contribute to the Zn(2+) site.

It belongs to the PRA-CH family. In terms of assembly, homodimer. It depends on Mg(2+) as a cofactor. Zn(2+) serves as cofactor.

The protein localises to the cytoplasm. It catalyses the reaction 1-(5-phospho-beta-D-ribosyl)-5'-AMP + H2O = 1-(5-phospho-beta-D-ribosyl)-5-[(5-phospho-beta-D-ribosylamino)methylideneamino]imidazole-4-carboxamide. The protein operates within amino-acid biosynthesis; L-histidine biosynthesis; L-histidine from 5-phospho-alpha-D-ribose 1-diphosphate: step 3/9. Its function is as follows. Catalyzes the hydrolysis of the adenine ring of phosphoribosyl-AMP. The chain is Phosphoribosyl-AMP cyclohydrolase from Pyrobaculum aerophilum (strain ATCC 51768 / DSM 7523 / JCM 9630 / CIP 104966 / NBRC 100827 / IM2).